A 210-amino-acid polypeptide reads, in one-letter code: Orotate phosphoribosyltransferase (210 aa).

Residues Arg94, Lys98, His100, and 120-128 (EDLISTGGS) each bind 5-phospho-alpha-D-ribose 1-diphosphate. Ser124 lines the orotate pocket.

Belongs to the purine/pyrimidine phosphoribosyltransferase family. PyrE subfamily. In terms of assembly, homodimer. Mg(2+) is required as a cofactor.

It catalyses the reaction orotidine 5'-phosphate + diphosphate = orotate + 5-phospho-alpha-D-ribose 1-diphosphate. It participates in pyrimidine metabolism; UMP biosynthesis via de novo pathway; UMP from orotate: step 1/2. Functionally, catalyzes the transfer of a ribosyl phosphate group from 5-phosphoribose 1-diphosphate to orotate, leading to the formation of orotidine monophosphate (OMP). This is Orotate phosphoribosyltransferase from Bacillus cytotoxicus (strain DSM 22905 / CIP 110041 / 391-98 / NVH 391-98).